Here is a 492-residue protein sequence, read N- to C-terminus: 6-phosphogluconate dehydrogenase, decarboxylating 2 (492 aa).

NADP(+)-binding positions include 12-17, 35-37, 77-79, and asparagine 105; these read GLAVMG, NRT, and IKA. Substrate is bound by residues asparagine 105 and 131–133; that span reads SGG. Catalysis depends on lysine 185, which acts as the Proton acceptor. 188 to 189 contacts substrate; sequence HN. Glutamate 192 functions as the Proton donor in the catalytic mechanism. Tyrosine 193, lysine 262, arginine 289, arginine 449, and histidine 455 together coordinate substrate.

Belongs to the 6-phosphogluconate dehydrogenase family. Homodimer.

It catalyses the reaction 6-phospho-D-gluconate + NADP(+) = D-ribulose 5-phosphate + CO2 + NADPH. Its pathway is carbohydrate degradation; pentose phosphate pathway; D-ribulose 5-phosphate from D-glucose 6-phosphate (oxidative stage): step 3/3. In terms of biological role, catalyzes the oxidative decarboxylation of 6-phosphogluconate to ribulose 5-phosphate and CO(2), with concomitant reduction of NADP to NADPH. This Saccharomyces cerevisiae (strain ATCC 204508 / S288c) (Baker's yeast) protein is 6-phosphogluconate dehydrogenase, decarboxylating 2 (GND2).